Here is a 512-residue protein sequence, read N- to C-terminus: 2-isopropylmalate synthase (512 aa).

A Pyruvate carboxyltransferase domain is found at Leu5–Leu268. Mn(2+) contacts are provided by Asp14, His202, His204, and Asn239. A regulatory domain region spans residues Gly394–Gly512.

This sequence belongs to the alpha-IPM synthase/homocitrate synthase family. LeuA type 1 subfamily. As to quaternary structure, homodimer. Mn(2+) serves as cofactor.

It localises to the cytoplasm. It catalyses the reaction 3-methyl-2-oxobutanoate + acetyl-CoA + H2O = (2S)-2-isopropylmalate + CoA + H(+). The protein operates within amino-acid biosynthesis; L-leucine biosynthesis; L-leucine from 3-methyl-2-oxobutanoate: step 1/4. In terms of biological role, catalyzes the condensation of the acetyl group of acetyl-CoA with 3-methyl-2-oxobutanoate (2-ketoisovalerate) to form 3-carboxy-3-hydroxy-4-methylpentanoate (2-isopropylmalate). This is 2-isopropylmalate synthase from Verminephrobacter eiseniae (strain EF01-2).